Consider the following 115-residue polypeptide: NADH-ubiquinone oxidoreductase chain 3 (115 aa).

A run of 3 helical transmembrane segments spans residues 3–23 (LLIIITINITLSFILISIAFW), 55–75 (FFLVAITFLLFDLEIALLLPL), and 86–106 (TMMATAFILVTILALGLSYEW).

It belongs to the complex I subunit 3 family. Core subunit of respiratory chain NADH dehydrogenase (Complex I) which is composed of 45 different subunits. Interacts with TMEM186. Interacts with TMEM242.

It is found in the mitochondrion inner membrane. The enzyme catalyses a ubiquinone + NADH + 5 H(+)(in) = a ubiquinol + NAD(+) + 4 H(+)(out). Core subunit of the mitochondrial membrane respiratory chain NADH dehydrogenase (Complex I) which catalyzes electron transfer from NADH through the respiratory chain, using ubiquinone as an electron acceptor. Essential for the catalytic activity of complex I. In Rattus norvegicus (Rat), this protein is NADH-ubiquinone oxidoreductase chain 3.